A 623-amino-acid chain; its full sequence is Putative pentatricopeptide repeat-containing protein At3g11460, mitochondrial (623 aa).

The N-terminal 35 residues, 1-35 (MIVVTSFVRNSAVAAVASTPWNVRLRELAYQSLFS), are a transit peptide targeting the mitochondrion. PPR repeat units lie at residues 17-51 (ASTP…GSSP), 52-86 (DAFS…GCET), 87-117 (EPFV…NPQS), 120-154 (LSVC…GVSV), 155-189 (DSVT…GLDS), 190-220 (EVAV…MPVK), 221-255 (GLIT…GVCP), 256-290 (DPFT…GFVP), 291-321 (NVFV…MPVK), 322-356 (SLVS…GIRP), 357-387 (DGAV…MKRE), and 393-423 (GPEH…MPVE). The type E motif stretch occupies residues 428–503 (VWGALLGACK…KPGYSYVEHK (76 aa)). Residues 504-535 (GRVHLFLAGDRSHEQTEEVHRMLDELETSVME) are type E(+) motif. Positions 536–623 (LAGNMDCDRG…DGVCSCKDYW (88 aa)) are type DYW motif.

It belongs to the PPR family. PCMP-H subfamily. Interacts with MORF8/RIP1.

It localises to the mitochondrion. Its function is as follows. Involved in C-to-U editing of mitochondrial RNA. Required specifically for editing the mitochondrial NAD2 transcript. The protein is Putative pentatricopeptide repeat-containing protein At3g11460, mitochondrial (PCMP-H52) of Arabidopsis thaliana (Mouse-ear cress).